The chain runs to 149 residues: Large ribosomal subunit protein bL9 (149 aa).

Belongs to the bacterial ribosomal protein bL9 family.

Its function is as follows. Binds to the 23S rRNA. This is Large ribosomal subunit protein bL9 from Persephonella marina (strain DSM 14350 / EX-H1).